The chain runs to 316 residues: tRNA dimethylallyltransferase (316 aa).

ATP is bound at residue 13 to 20 (GPTAVGKT). 15–20 (TAVGKT) provides a ligand contact to substrate. Positions 38–41 (DSIQ) are interaction with substrate tRNA.

The protein belongs to the IPP transferase family. In terms of assembly, monomer. It depends on Mg(2+) as a cofactor.

It catalyses the reaction adenosine(37) in tRNA + dimethylallyl diphosphate = N(6)-dimethylallyladenosine(37) in tRNA + diphosphate. Its function is as follows. Catalyzes the transfer of a dimethylallyl group onto the adenine at position 37 in tRNAs that read codons beginning with uridine, leading to the formation of N6-(dimethylallyl)adenosine (i(6)A). The chain is tRNA dimethylallyltransferase from Staphylococcus carnosus (strain TM300).